The following is a 109-amino-acid chain: uncharacterized protein (109 aa).

Positions 1 to 28 (MNMLAYFLYCRQLLLAVVLIEFPPRLCG) are cleaved as a signal peptide.

This is an uncharacterized protein from Homo sapiens (Human).